Consider the following 368-residue polypeptide: Methionine import ATP-binding protein MetN (368 aa).

Positions 5–260 (IELNNLSVQF…PKEALTKQFI (256 aa)) constitute an ABC transporter domain. ATP is bound at residue 41–48 (GYSGAGKS).

Belongs to the ABC transporter superfamily. Methionine importer (TC 3.A.1.24) family. In terms of assembly, the complex is composed of two ATP-binding proteins (MetN), two transmembrane proteins (MetI) and a solute-binding protein (MetQ).

It is found in the cell membrane. The enzyme catalyses L-methionine(out) + ATP + H2O = L-methionine(in) + ADP + phosphate + H(+). It carries out the reaction D-methionine(out) + ATP + H2O = D-methionine(in) + ADP + phosphate + H(+). Functionally, part of the ABC transporter complex MetNIQ involved in methionine import. Responsible for energy coupling to the transport system. This chain is Methionine import ATP-binding protein MetN, found in Lactococcus lactis subsp. lactis (strain IL1403) (Streptococcus lactis).